The chain runs to 285 residues: Bifunctional protein FolD (285 aa).

NADP(+)-binding positions include 165–167 (GRS) and Ser-190.

It belongs to the tetrahydrofolate dehydrogenase/cyclohydrolase family. In terms of assembly, homodimer.

It catalyses the reaction (6R)-5,10-methylene-5,6,7,8-tetrahydrofolate + NADP(+) = (6R)-5,10-methenyltetrahydrofolate + NADPH. The catalysed reaction is (6R)-5,10-methenyltetrahydrofolate + H2O = (6R)-10-formyltetrahydrofolate + H(+). The protein operates within one-carbon metabolism; tetrahydrofolate interconversion. Functionally, catalyzes the oxidation of 5,10-methylenetetrahydrofolate to 5,10-methenyltetrahydrofolate and then the hydrolysis of 5,10-methenyltetrahydrofolate to 10-formyltetrahydrofolate. The protein is Bifunctional protein FolD of Staphylococcus carnosus (strain TM300).